Consider the following 324-residue polypeptide: Acetyl-coenzyme A carboxylase carboxyl transferase subunit alpha (324 aa).

A CoA carboxyltransferase C-terminal domain is found at 37–291 (KLEKRLDKLK…REFIIQEWLR (255 aa)).

It belongs to the AccA family. Acetyl-CoA carboxylase is a heterohexamer composed of biotin carboxyl carrier protein (AccB), biotin carboxylase (AccC) and two subunits each of ACCase subunit alpha (AccA) and ACCase subunit beta (AccD).

The protein localises to the cytoplasm. It catalyses the reaction N(6)-carboxybiotinyl-L-lysyl-[protein] + acetyl-CoA = N(6)-biotinyl-L-lysyl-[protein] + malonyl-CoA. Its pathway is lipid metabolism; malonyl-CoA biosynthesis; malonyl-CoA from acetyl-CoA: step 1/1. Component of the acetyl coenzyme A carboxylase (ACC) complex. First, biotin carboxylase catalyzes the carboxylation of biotin on its carrier protein (BCCP) and then the CO(2) group is transferred by the carboxyltransferase to acetyl-CoA to form malonyl-CoA. In Chlamydia pneumoniae (Chlamydophila pneumoniae), this protein is Acetyl-coenzyme A carboxylase carboxyl transferase subunit alpha.